Reading from the N-terminus, the 128-residue chain is uncharacterized protein (128 aa).

Residues 1 to 28 (MDADDFGKKDLENGNESPKKPIFMKDWK) are compositionally biased toward basic and acidic residues. The disordered stretch occupies residues 1–30 (MDADDFGKKDLENGNESPKKPIFMKDWKNS).

The protein resides in the cytoplasm. It localises to the nucleus. This is an uncharacterized protein from Schizosaccharomyces pombe (strain 972 / ATCC 24843) (Fission yeast).